We begin with the raw amino-acid sequence, 499 residues long: Pleckstrin homology domain-containing family O member 2 (499 aa).

Residues 1–11 (MEEEGVKEGGQ) are compositionally biased toward basic and acidic residues. Positions 1 to 21 (MEEEGVKEGGQRPRSAQTADK) are disordered. Positions 18–119 (TADKAGWIKK…WIKALNEGIN (102 aa)) constitute a PH domain. Ser167 carries the post-translational modification Phosphoserine. Residues 170 to 419 (LSRLDLDVPD…RRRQPGEQLH (250 aa)) form a disordered region. Positions 201-212 (RPPMPPAKPSPA) are enriched in pro residues. Over residues 229 to 238 (SAPAPVPASS) the composition is skewed to low complexity. Phosphoserine occurs at positions 237 and 238. The segment covering 246–258 (EDLETPVVEDSDS) has biased composition (acidic residues). Ser273 is modified (phosphoserine). 2 positions are modified to phosphothreonine: Thr298 and Thr311. Low complexity-rich tracts occupy residues 329 to 349 (EASG…GPAE) and 367 to 386 (AAGP…TLPP). Ser399 carries the post-translational modification Phosphoserine. The stretch at 416–492 (EQLHRAQLEV…LREKRRELVT (77 aa)) forms a coiled coil.

The sequence is that of Pleckstrin homology domain-containing family O member 2 (PLEKHO2) from Bos taurus (Bovine).